The chain runs to 650 residues: PTS system mannose-specific EIIBCA component (650 aa).

Residues 1 to 98 form the PTS EIIB type-2 domain; that stretch reads MKLLAITSCP…PEELIQKALN (98 aa). Catalysis depends on cysteine 9, which acts as the Phosphocysteine intermediate; for EIIB activity. Residues 123–456 enclose the PTS EIIC type-2 domain; sequence IYRHLMNGVS…SLVTALFVNV (334 aa). The next 7 membrane-spanning stretches (helical) occupy residues 133–153, 174–194, 199–219, 221–241, 256–276, 297–317, and 336–356; these read FMVP…TLGG, IGSA…AYSI, GLVP…YDSA, GAGF…ALWI, IIII…FLIG, SSIL…GGPV, and IMGP…IATF. Position 365 is a phosphoserine (serine 365). 3 consecutive transmembrane segments (helical) span residues 369-389, 396-416, and 436-456; these read MGKA…IPFA, VIPS…IGNV, and VLMF…FVNV. The region spanning 504 to 649 is the PTS EIIA type-2 domain; sequence DIISPELIEP…EEAYKLLEEI (146 aa). The Tele-phosphohistidine intermediate; for EIIA activity role is filled by histidine 566.

It localises to the cell membrane. It carries out the reaction D-mannose(out) + N(pros)-phospho-L-histidyl-[protein] = D-mannose 6-phosphate(in) + L-histidyl-[protein]. Its function is as follows. The phosphoenolpyruvate-dependent sugar phosphotransferase system (sugar PTS), a major carbohydrate active -transport system, catalyzes the phosphorylation of incoming sugar substrates concomitantly with their translocation across the cell membrane. This system is involved in mannose transport. This is PTS system mannose-specific EIIBCA component (manP) from Bacillus subtilis (strain 168).